A 372-amino-acid polypeptide reads, in one-letter code: NAD(P)H-quinone oxidoreductase subunit 1 (372 aa).

The next 8 helical transmembrane spans lie at leucine 27 to valine 47, valine 97 to valine 117, valine 128 to methionine 148, alanine 166 to methionine 186, phenylalanine 204 to leucine 224, valine 266 to isoleucine 286, serine 308 to leucine 328, and phenylalanine 347 to proline 367.

This sequence belongs to the complex I subunit 1 family. In terms of assembly, NDH-1 is composed of at least 11 different subunits.

It is found in the cellular thylakoid membrane. The enzyme catalyses a plastoquinone + NADH + (n+1) H(+)(in) = a plastoquinol + NAD(+) + n H(+)(out). It carries out the reaction a plastoquinone + NADPH + (n+1) H(+)(in) = a plastoquinol + NADP(+) + n H(+)(out). NDH-1 shuttles electrons from an unknown electron donor, via FMN and iron-sulfur (Fe-S) centers, to quinones in the respiratory and/or the photosynthetic chain. The immediate electron acceptor for the enzyme in this species is believed to be plastoquinone. Couples the redox reaction to proton translocation, and thus conserves the redox energy in a proton gradient. The protein is NAD(P)H-quinone oxidoreductase subunit 1 of Prochlorococcus marinus (strain NATL2A).